The following is a 355-amino-acid chain: tRNA uridine(34) hydroxylase (355 aa).

A Rhodanese domain is found at 146–240 (DDPDTVFVDM…YARQAKAQGL (95 aa)). C200 functions as the Cysteine persulfide intermediate in the catalytic mechanism.

It belongs to the TrhO family.

It catalyses the reaction uridine(34) in tRNA + AH2 + O2 = 5-hydroxyuridine(34) in tRNA + A + H2O. In terms of biological role, catalyzes oxygen-dependent 5-hydroxyuridine (ho5U) modification at position 34 in tRNAs. This Pectobacterium atrosepticum (strain SCRI 1043 / ATCC BAA-672) (Erwinia carotovora subsp. atroseptica) protein is tRNA uridine(34) hydroxylase.